The following is a 294-amino-acid chain: Thymidylate synthase (294 aa).

DUMP is bound by residues Arg30 and 156–157; that span reads RR. The Nucleophile role is filled by Cys176. DUMP-binding positions include 196–199, Asn207, and 237–239; these read RSGD and HVY. Asp199 provides a ligand contact to (6R)-5,10-methylene-5,6,7,8-tetrahydrofolate. Ala293 lines the (6R)-5,10-methylene-5,6,7,8-tetrahydrofolate pocket.

Belongs to the thymidylate synthase family. As to quaternary structure, homodimer.

It catalyses the reaction dUMP + (6R)-5,10-methylene-5,6,7,8-tetrahydrofolate = 7,8-dihydrofolate + dTMP. The protein operates within pyrimidine metabolism; dTTP biosynthesis. This is Thymidylate synthase from Ascaris suum (Pig roundworm).